A 757-amino-acid chain; its full sequence is Mitofusin-2 (757 aa).

The Cytoplasmic portion of the chain corresponds to 1–604 (MSLLFSRCNS…TQEEFMVSMV (604 aa)). The segment at 30-94 (KHFVTAKKKI…VRGISEVLAR (65 aa)) is part of a helix bundle domain, formed by helices from N-terminal and C-terminal regions. Residues 93 to 342 (ARRHMKVAFF…VRMFEFQNFE (250 aa)) form the Dynamin-type G domain. Positions 103–110 (GRTSNGKS) are G1 motif. A GTP-binding site is contributed by 106–111 (SNGKST). T111 carries the post-translational modification Phosphothreonine; by PINK1. Residues 129-130 (TT) are G2 motif. Positions 199 to 202 (DSPG) are G3 motif. 258–261 (NRWD) contacts GTP. A G4 motif region spans residues 258 to 261 (NRWD). E288 is a region of interest (G5 motif). Residues S305 and K307 each contribute to the GTP site. The segment at 359-385 (EQHTVRAKQIAEAVRLIMDSLHMAARE) is part of a helix bundle domain, formed by helices from N-terminal and C-terminal regions. Residues 391-434 (EEMREERQDRLKFIDKQLELLAQDYKLRIKQITEEVERQVSTAM) adopt a coiled-coil conformation. A Phosphoserine; by PINK1 modification is found at S442. A helical membrane pass occupies residues 605–625 (TGLASLTSRTSMGILVVGGVV). A topological domain (mitochondrial intermembrane) is located at residue W626. The helical transmembrane segment at 627 to 647 (KAVGWRLIALSFGLYGLLYVY) threads the bilayer. The Cytoplasmic portion of the chain corresponds to 648-757 (ERLTWTTKAK…FTHQYLQPSR (110 aa)). The stretch at 695-738 (TFAHLCQQVDVTRENLEQEIAAMNKKIEVLDSLQSKAKLLRNKA) forms a coiled coil. The segment at 722–753 (EVLDSLQSKAKLLRNKAGWLDSELNMFTHQYL) is part of a helix bundle domain, formed by helices from N-terminal and C-terminal regions.

The protein belongs to the TRAFAC class dynamin-like GTPase superfamily. Dynamin/Fzo/YdjA family. Mitofusin subfamily. As to quaternary structure, forms homomultimers and heteromultimers with MFN1. Oligomerization is essential for mitochondrion fusion. Interacts with VAT1. Interacts with STOML2; may form heterooligomers. Interacts (phosphorylated) with PRKN. Interacts with EIF2AK3. Interacts with THG1L; THG1L probably functions as a guanyl-nucleotide exchange factor/GEF, activating MFN2. Post-translationally, phosphorylated by PINK1. Ubiquitinated by non-degradative ubiquitin by PRKN, promoting mitochondrial fusion; deubiquitination by USP30 inhibits mitochondrial fusion. Ubiquitinated by HUWE1 when dietary stearate (C18:0) levels are low; ubiquitination inhibits mitochondrial fusion. As to expression, ubiquitous; expressed at low level. Highly expressed in heart and kidney.

The protein localises to the mitochondrion outer membrane. It carries out the reaction GTP + H2O = GDP + phosphate + H(+). Functionally, mitochondrial outer membrane GTPase that mediates mitochondrial clustering and fusion. Mitochondria are highly dynamic organelles, and their morphology is determined by the equilibrium between mitochondrial fusion and fission events. Overexpression induces the formation of mitochondrial networks. Membrane clustering requires GTPase activity and may involve a major rearrangement of the coiled coil domains. Plays a central role in mitochondrial metabolism and may be associated with obesity and/or apoptosis processes. Plays an important role in the regulation of vascular smooth muscle cell proliferation. Involved in the clearance of damaged mitochondria via selective autophagy (mitophagy). Is required for PRKN recruitment to dysfunctional mitochondria. Involved in the control of unfolded protein response (UPR) upon ER stress including activation of apoptosis and autophagy during ER stress. Acts as an upstream regulator of EIF2AK3 and suppresses EIF2AK3 activation under basal conditions. This is Mitofusin-2 from Homo sapiens (Human).